A 432-amino-acid chain; its full sequence is Neuronal pentraxin-2 (432 aa).

The first 14 residues, 1 to 14 (MLALLTAGVALAVA), serve as a signal peptide directing secretion. Asn-149 and Asn-190 each carry an N-linked (GlcNAc...) asparagine glycan. Positions 224–425 (DAFKVSLPLR…GASKWPVETC (202 aa)) constitute a Pentraxin (PTX) domain. The cysteines at positions 254 and 314 are disulfide-linked. Ca(2+) contacts are provided by Asn-278, Glu-356, Gln-357, Asp-358, and Gln-368. Asn-394 carries an N-linked (GlcNAc...) asparagine glycan.

Homooligomer or heterooligomer (probably pentamer) with neuronal pentraxin receptor (NPTXR). Ca(2+) is required as a cofactor.

The protein localises to the secreted. Functionally, likely to play role in the modification of cellular properties that underlie long-term plasticity. Binds to agar matrix in a calcium-dependent manner. This is Neuronal pentraxin-2 (Nptx2) from Rattus norvegicus (Rat).